Here is a 320-residue protein sequence, read N- to C-terminus: D-alanine--D-alanine ligase (320 aa).

The ATP-grasp domain maps to 104–308 (KRVCLSHGVP…YEDLCVEILR (205 aa)). 134-189 (AAEFGMPLMLKAPHEGSTIGIAKVETAEGMQAGFDLCAKYDDVVLVEQFVKGRELT) is an ATP binding site. Positions 261, 275, and 277 each coordinate Mg(2+).

Belongs to the D-alanine--D-alanine ligase family. Mg(2+) serves as cofactor. Mn(2+) is required as a cofactor.

It localises to the cytoplasm. The catalysed reaction is 2 D-alanine + ATP = D-alanyl-D-alanine + ADP + phosphate + H(+). Its pathway is cell wall biogenesis; peptidoglycan biosynthesis. Functionally, cell wall formation. This chain is D-alanine--D-alanine ligase, found in Janthinobacterium sp. (strain Marseille) (Minibacterium massiliensis).